Reading from the N-terminus, the 186-residue chain is Ribosome-recycling factor (186 aa).

This sequence belongs to the RRF family.

Its subcellular location is the cytoplasm. In terms of biological role, responsible for the release of ribosomes from messenger RNA at the termination of protein biosynthesis. May increase the efficiency of translation by recycling ribosomes from one round of translation to another. This chain is Ribosome-recycling factor, found in Polynucleobacter asymbioticus (strain DSM 18221 / CIP 109841 / QLW-P1DMWA-1) (Polynucleobacter necessarius subsp. asymbioticus).